A 181-amino-acid polypeptide reads, in one-letter code: MNMVSLPETINSPILYFLDVGILLGGLGVVFFGKIIYSALFLGVVFVCVALLYLLLNADFLAAAQILIYVGAINVLIVFAIMLINKPETKINKKKITFGDILSGFSVFGLFSFLIIMILNTTWLQPTLVSQEVKNSFQSIDIIGIHLLTDLLLPFELLSILLLVALVGAITIARKEISPKI.

5 helical membrane passes run 13 to 33 (PILY…VFFG), 35 to 55 (IIYS…LYLL), 64 to 84 (AQIL…IMLI), 98 to 118 (FGDI…IIMI), and 152 to 172 (LLPF…AITI).

Belongs to the complex I subunit 6 family. In terms of assembly, NDH is composed of at least 16 different subunits, 5 of which are encoded in the nucleus.

It localises to the plastid. The protein localises to the chloroplast thylakoid membrane. It catalyses the reaction a plastoquinone + NADH + (n+1) H(+)(in) = a plastoquinol + NAD(+) + n H(+)(out). The catalysed reaction is a plastoquinone + NADPH + (n+1) H(+)(in) = a plastoquinol + NADP(+) + n H(+)(out). NDH shuttles electrons from NAD(P)H:plastoquinone, via FMN and iron-sulfur (Fe-S) centers, to quinones in the photosynthetic chain and possibly in a chloroplast respiratory chain. The immediate electron acceptor for the enzyme in this species is believed to be plastoquinone. Couples the redox reaction to proton translocation, and thus conserves the redox energy in a proton gradient. This chain is NAD(P)H-quinone oxidoreductase subunit 6, chloroplastic (ndhG), found in Staurastrum punctulatum (Green alga).